Consider the following 402-residue polypeptide: N-acetyltransferase Eis (402 aa).

The N-acetyltransferase domain occupies 3–154 (VTLCSPTEDD…RFARFHADAP (152 aa)). Acetyl-CoA contacts are provided by residues 85–87 (VAV), 93–98 (RRGLLR), and 121–122 (SE). Residue Tyr-126 is the Proton donor of the active site. The active-site Proton acceptor; via carboxylate is the Phe-402.

It belongs to the acetyltransferase Eis family. In terms of assembly, homohexamer; trimer of dimers.

Its subcellular location is the secreted. The protein localises to the host cytoplasmic vesicle. The protein resides in the host phagosome. It localises to the extracellular vesicle. It is found in the bacterial extracellular vesicle. Its subcellular location is the host extracellular space. The enzyme catalyses L-lysyl-[protein] + acetyl-CoA = N(6)-acetyl-L-lysyl-[protein] + CoA + H(+). Functionally, effector that is released into the host cell and affects host immune responses. Acts as an acetyltransferase that acetylates lysine residues of host proteins. The protein is N-acetyltransferase Eis of Mycobacterium bovis (strain BCG / Pasteur 1173P2).